Reading from the N-terminus, the 199-residue chain is Extracellular superoxide dismutase [Cu-Zn] (199 aa).

An N-terminal signal peptide occupies residues 1–20 (MMIASFAIFLSHIIFITYAT). N-linked (GlcNAc...) asparagine glycosylation is found at asparagine 33, asparagine 60, and asparagine 70. Cu cation contacts are provided by histidine 89, histidine 91, and histidine 106. A disulfide bridge connects residues cysteine 100 and cysteine 192. Histidine 106 lines the Zn(2+) pocket. A glycan (N-linked (GlcNAc...) asparagine) is linked at asparagine 111. Zn(2+)-binding residues include histidine 114, histidine 123, and aspartate 126. Histidine 163 lines the Cu cation pocket.

This sequence belongs to the Cu-Zn superoxide dismutase family. As to quaternary structure, homodimer. The cofactor is Cu cation. Zn(2+) is required as a cofactor.

Its subcellular location is the secreted. The protein localises to the extracellular space. The catalysed reaction is 2 superoxide + 2 H(+) = H2O2 + O2. Functionally, protect the extracellular space from toxic effect of reactive oxygen intermediates by converting superoxide radicals into hydrogen peroxide and oxygen. May act in the parasite defense by neutralizing superoxide generated by activated leukocytes, thus acting as both an antioxidant and an anti-inflammatory factor. The protein is Extracellular superoxide dismutase [Cu-Zn] of Brugia pahangi (Filarial nematode worm).